The chain runs to 652 residues: Coiled-coil domain-containing protein 81 (652 aa).

Phosphoserine is present on S206. Positions 238–256 (KCKLKDQSDKEEGTRDISS) are enriched in basic and acidic residues. The disordered stretch occupies residues 238–258 (KCKLKDQSDKEEGTRDISSPK). 3 positions are modified to phosphoserine: S275, S296, and S417. Residues 436–493 (MDNRQENEIKQRQYRELMDRLEQVQLTEELAAQRAKFLKDKMEETQCYKRALDAQIKN) adopt a coiled-coil conformation.

The protein localises to the cytoplasm. It is found in the cytoskeleton. The protein resides in the microtubule organizing center. Its subcellular location is the centrosome. This is Coiled-coil domain-containing protein 81 (CCDC81) from Homo sapiens (Human).